Reading from the N-terminus, the 113-residue chain is Large ribosomal subunit protein P2B (113 aa).

Positions 66-113 (PSGGGAIDMGAPAAVAGGGAAPAEEAKKEEKVEEKEESDEDMGFSLFD) are disordered. Basic and acidic residues predominate over residues 89–99 (EEAKKEEKVEE).

The protein belongs to the eukaryotic ribosomal protein P1/P2 family. As to quaternary structure, P1 and P2 exist as dimers at the large ribosomal subunit. Post-translationally, phosphorylated.

Its function is as follows. Plays an important role in the elongation step of protein synthesis. The polypeptide is Large ribosomal subunit protein P2B (RPP2B) (Zea mays (Maize)).